Reading from the N-terminus, the 283-residue chain is Pantothenate synthetase (283 aa).

An ATP-binding site is contributed by 34–41 (MGALHEGH). Catalysis depends on histidine 41, which acts as the Proton donor. Residue glutamine 65 coordinates (R)-pantoate. Residue glutamine 65 coordinates beta-alanine. Residue 152–155 (GQKD) participates in ATP binding. Glutamine 158 lines the (R)-pantoate pocket. ATP is bound by residues valine 181 and 189-192 (MSSR).

This sequence belongs to the pantothenate synthetase family. As to quaternary structure, homodimer.

It is found in the cytoplasm. It catalyses the reaction (R)-pantoate + beta-alanine + ATP = (R)-pantothenate + AMP + diphosphate + H(+). The protein operates within cofactor biosynthesis; (R)-pantothenate biosynthesis; (R)-pantothenate from (R)-pantoate and beta-alanine: step 1/1. Catalyzes the condensation of pantoate with beta-alanine in an ATP-dependent reaction via a pantoyl-adenylate intermediate. This Nitrobacter winogradskyi (strain ATCC 25391 / DSM 10237 / CIP 104748 / NCIMB 11846 / Nb-255) protein is Pantothenate synthetase.